Here is a 132-residue protein sequence, read N- to C-terminus: U10-hexatoxin-Hi1a (132 aa).

An N-terminal signal peptide occupies residues 1–20 (MKGFIVFSLSLCLVFTVCLA). The propeptide occupies 21–30 (EDELMKEAVR).

Contains 5 disulfide bonds. As to expression, expressed by the venom gland.

It is found in the secreted. Its function is as follows. Probable ion channel inhibitor. In Hadronyche infensa (Fraser island funnel-web spider), this protein is U10-hexatoxin-Hi1a.